An 84-amino-acid chain; its full sequence is Cell division topological specificity factor (84 aa).

The protein belongs to the MinE family.

In terms of biological role, prevents the cell division inhibition by proteins MinC and MinD at internal division sites while permitting inhibition at polar sites. This ensures cell division at the proper site by restricting the formation of a division septum at the midpoint of the long axis of the cell. The chain is Cell division topological specificity factor from Pseudomonas putida (strain W619).